The chain runs to 170 residues: Cysteine-rich uncharacterized protein 241L (170 aa).

The chain is Cysteine-rich uncharacterized protein 241L from Acheta domesticus (House cricket).